Here is a 394-residue protein sequence, read N- to C-terminus: Chaperone protein DnaJ (394 aa).

Residues 4–68 (DYYEILGVSR…ELRARYDRFG (65 aa)) form the J domain. A CR-type zinc finger spans residues 136–218 (GGEKQIRISH…CNGEGLAQTT (83 aa)). Residues C149, C152, C166, C169, C192, C195, C206, and C209 each coordinate Zn(2+). CXXCXGXG motif repeat units lie at residues 149-156 (CPVCGGSG), 166-173 (CPTCGGAG), 192-199 (CPTCGGAG), and 206-213 (CYNCNGEG).

The protein belongs to the DnaJ family. In terms of assembly, homodimer. It depends on Zn(2+) as a cofactor.

It localises to the cytoplasm. Functionally, participates actively in the response to hyperosmotic and heat shock by preventing the aggregation of stress-denatured proteins and by disaggregating proteins, also in an autonomous, DnaK-independent fashion. Unfolded proteins bind initially to DnaJ; upon interaction with the DnaJ-bound protein, DnaK hydrolyzes its bound ATP, resulting in the formation of a stable complex. GrpE releases ADP from DnaK; ATP binding to DnaK triggers the release of the substrate protein, thus completing the reaction cycle. Several rounds of ATP-dependent interactions between DnaJ, DnaK and GrpE are required for fully efficient folding. Also involved, together with DnaK and GrpE, in the DNA replication of plasmids through activation of initiation proteins. The sequence is that of Chaperone protein DnaJ from Synechococcus sp. (strain JA-3-3Ab) (Cyanobacteria bacterium Yellowstone A-Prime).